We begin with the raw amino-acid sequence, 241 residues long: MPKKAVVLLSGGLDSSTVLAYALNKGFEVYAISFDYGQRHLKEMKSSEAISKFYNVDRKIVKVDLRSIGKSALTDNIEVPSRDISTIEEEIPVTYVPARNTIFLSIAAAYAESLGTNEVFIGANAIDYSGYPDCRPEYFNAMENALSLGTKIGLKEKFHINVPLQYLSKADIVKLGVKLNVPYELTWSCYKGEEEACGECDSCQLRLKGFMEAGFADPLKYSKYPEFYSKNLVKLRPLKRR.

9 to 19 (LSGGLDSSTVL) contributes to the ATP binding site. Zn(2+)-binding residues include Cys-189, Cys-197, Cys-200, and Cys-203.

Belongs to the QueC family. Requires Zn(2+) as cofactor.

It carries out the reaction 7-carboxy-7-deazaguanine + NH4(+) + ATP = 7-cyano-7-deazaguanine + ADP + phosphate + H2O + H(+). It functions in the pathway purine metabolism; 7-cyano-7-deazaguanine biosynthesis. In terms of biological role, catalyzes the ATP-dependent conversion of 7-carboxy-7-deazaguanine (CDG) to 7-cyano-7-deazaguanine (preQ(0)). This Thermoplasma volcanium (strain ATCC 51530 / DSM 4299 / JCM 9571 / NBRC 15438 / GSS1) protein is 7-cyano-7-deazaguanine synthase.